Here is a 526-residue protein sequence, read N- to C-terminus: Glutamate--cysteine ligase (526 aa).

This sequence belongs to the glutamate--cysteine ligase type 1 family. Type 1 subfamily.

The enzyme catalyses L-cysteine + L-glutamate + ATP = gamma-L-glutamyl-L-cysteine + ADP + phosphate + H(+). It functions in the pathway sulfur metabolism; glutathione biosynthesis; glutathione from L-cysteine and L-glutamate: step 1/2. In Shewanella amazonensis (strain ATCC BAA-1098 / SB2B), this protein is Glutamate--cysteine ligase.